The sequence spans 148 residues: Small ribosomal subunit protein uS13 (148 aa).

Residues 128 to 148 (RGQRTKSTGRRGSTIGVRKKK) form a disordered region.

Belongs to the universal ribosomal protein uS13 family. Part of the 30S ribosomal subunit. Forms a loose heterodimer with protein S19. Forms two bridges to the 50S subunit in the 70S ribosome.

Functionally, located at the top of the head of the 30S subunit, it contacts several helices of the 16S rRNA. In the 70S ribosome it contacts the 23S rRNA (bridge B1a) and protein L5 of the 50S subunit (bridge B1b), connecting the 2 subunits; these bridges are implicated in subunit movement. This is Small ribosomal subunit protein uS13 from Methanococcoides burtonii (strain DSM 6242 / NBRC 107633 / OCM 468 / ACE-M).